We begin with the raw amino-acid sequence, 647 residues long: Threonine--tRNA ligase (647 aa).

One can recognise a TGS domain in the interval 1 to 61 (MIKITFPDGA…EEDGSIEIVT (61 aa)). Positions 240 to 538 (DHRKLGKELD…LIETYKGAFP (299 aa)) are catalytic. Zn(2+) is bound by residues Cys-334, His-385, and His-515.

This sequence belongs to the class-II aminoacyl-tRNA synthetase family. As to quaternary structure, homodimer. The cofactor is Zn(2+).

The protein localises to the cytoplasm. The enzyme catalyses tRNA(Thr) + L-threonine + ATP = L-threonyl-tRNA(Thr) + AMP + diphosphate + H(+). Its function is as follows. Catalyzes the attachment of threonine to tRNA(Thr) in a two-step reaction: L-threonine is first activated by ATP to form Thr-AMP and then transferred to the acceptor end of tRNA(Thr). Also edits incorrectly charged L-seryl-tRNA(Thr). This chain is Threonine--tRNA ligase, found in Streptococcus agalactiae serotype III (strain NEM316).